The chain runs to 186 residues: Calcium load-activated calcium channel homolog (186 aa).

Topologically, residues 1–6 (MLGDCL) are cytoplasmic. Residues 7–27 (LIIAIAFGTALAGEGITWLLV) form a helical membrane-spanning segment. Topologically, residues 28–87 (YRSDHYKRLKADMDKKTKKLEKKKQEVGDTNDKNIKRKLEREEERLKATNRDMSMFKMKS) are lumenal. Residues 30–86 (SDHYKRLKADMDKKTKKLEKKKQEVGDTNDKNIKRKLEREEERLKATNRDMSMFKMK) adopt a coiled-coil conformation. The helical transmembrane segment at 88 to 108 (MFAIGLAFTALLSTFNSIFEG) threads the bilayer. Residues 109-134 (RVVAKLPFYPIGFIQGLSHRNLIGED) lie on the Cytoplasmic side of the membrane. Positions 135–151 (MTDCSFIFLYILCTMTV) form an intramembrane region, pore-forming. Topologically, residues 152-186 (RQNLQKILGFAPSRAMARQQSSPWAPPNSQMNYLR) are cytoplasmic.

It belongs to the TMCO1 family. In terms of assembly, homodimer and homotetramer.

It is found in the endoplasmic reticulum membrane. Calcium-selective channel required to prevent calcium stores from overfilling. This chain is Calcium load-activated calcium channel homolog, found in Caenorhabditis elegans.